Here is a 346-residue protein sequence, read N- to C-terminus: Structure-specific endonuclease subunit SLX1 (346 aa).

In terms of domain architecture, GIY-YIG spans 10–92 (ALYCVYILRS…TNPHTSLHIP (83 aa)). Residues 238–296 (CVVCKEEIDPEEGGLHAVCSNEGCEGVGHLRCWGRYLLKSEEGGGEGAILPVGGRCPRC) form an SLX1-type zinc finger. The span at 324 to 336 (KVKRKRAPRKKTA) shows a compositional bias: basic residues. Residues 324–346 (KVKRKRAPRKKTAKTKETREEDG) are disordered. Basic and acidic residues predominate over residues 337 to 346 (KTKETREEDG).

This sequence belongs to the SLX1 family. In terms of assembly, forms a heterodimer with SLX4. A divalent metal cation serves as cofactor.

It localises to the nucleus. Functionally, catalytic subunit of the SLX1-SLX4 structure-specific endonuclease that resolves DNA secondary structures generated during DNA repair and recombination. Has endonuclease activity towards branched DNA substrates, introducing single-strand cuts in duplex DNA close to junctions with ss-DNA. The protein is Structure-specific endonuclease subunit SLX1 of Podospora anserina (strain S / ATCC MYA-4624 / DSM 980 / FGSC 10383) (Pleurage anserina).